A 217-amino-acid chain; its full sequence is 3-demethoxyubiquinol 3-hydroxylase (217 aa).

Fe cation is bound by residues Glu-66, Glu-96, His-99, Glu-148, Glu-180, and His-183.

Belongs to the COQ7 family. Fe cation serves as cofactor.

The protein resides in the cell membrane. It carries out the reaction a 5-methoxy-2-methyl-3-(all-trans-polyprenyl)benzene-1,4-diol + AH2 + O2 = a 3-demethylubiquinol + A + H2O. It functions in the pathway cofactor biosynthesis; ubiquinone biosynthesis. Its function is as follows. Catalyzes the hydroxylation of 2-nonaprenyl-3-methyl-6-methoxy-1,4-benzoquinol during ubiquinone biosynthesis. The sequence is that of 3-demethoxyubiquinol 3-hydroxylase from Xylella fastidiosa (strain Temecula1 / ATCC 700964).